The chain runs to 77 residues: Large ribosomal subunit protein bL28 (77 aa).

The protein belongs to the bacterial ribosomal protein bL28 family.

This Verminephrobacter eiseniae (strain EF01-2) protein is Large ribosomal subunit protein bL28.